The primary structure comprises 595 residues: P2X purinoceptor 7 (595 aa).

The Cytoplasmic segment spans residues Met-1–Gln-22. Cys-4 is lipidated: S-palmitoyl cysteine. The helical transmembrane segment at Ser-23–Val-46 threads the bilayer. The Extracellular portion of the chain corresponds to Ser-47–Phe-328. 3 cysteine pairs are disulfide-bonded: Cys-119/Cys-168, Cys-129/Cys-152, and Cys-135/Cys-162. ADP-ribosylarginine is present on residues Arg-125 and Arg-133. The N-linked (GlcNAc...) asparagine glycan is linked to Asn-187. Thr-189 contributes to the ATP binding site. Asn-202 and Asn-213 each carry an N-linked (GlcNAc...) asparagine glycan. Cys-216 and Cys-226 are oxidised to a cystine. Asn-241 carries N-linked (GlcNAc...) asparagine glycosylation. Cysteines 260 and 269 form a disulfide. Residue Asn-284 is glycosylated (N-linked (GlcNAc...) asparagine). ATP contacts are provided by Arg-294 and Lys-311. A helical transmembrane segment spans residues Asp-329–Phe-353. Residue Ser-342 participates in Na(+) binding. Position 343 is a phosphotyrosine (Tyr-343). At Leu-354–Tyr-595 the chain is on the cytoplasmic side. A C-cys anchor region spans residues Ser-360 to Cys-377. S-palmitoyl cysteine attachment occurs at residues Cys-362, Cys-363, Cys-374, and Cys-377. Position 390 is a phosphoserine (Ser-390). A cytoplasmic ballast region spans residues Lys-395–Tyr-595. Positions 479, 499, and 506 each coordinate Zn(2+). GTP-binding residues include Arg-546, His-547, Tyr-550, and Ala-567. Cys-572 contributes to the Zn(2+) binding site. 3 residues coordinate GTP: Lys-583, Ser-589, and Gly-590.

Belongs to the P2X receptor family. Homotrimers. Interacts with LAMA3, ITGB2, ACTB, ACTN4, SVIL, MPP3, HSPA1, HSPCB, HSPA8, PIK230 and PTPRB. Interacts (via C-terminus) with EMP2. Interacts with isoform B; this interaction potentiates P2RX7 responses. Post-translationally, phosphorylation results in its inactivation. ADP-ribosylation at Arg-125 is necessary and sufficient to activate P2RX7 and gate the channel. In terms of processing, palmitoylation of several cysteines in the C-terminal cytoplasmic tail is required for efficient localization to cell surface. Palmitoylation prevents channel desensitization by physically anchoring the palmitoylated groups to the membrane. As to expression, widely expressed with highest levels in brain and immune tissues. In terms of tissue distribution, predominant form in many tissues.

Its subcellular location is the cell membrane. It carries out the reaction Ca(2+)(in) = Ca(2+)(out). The catalysed reaction is K(+)(in) = K(+)(out). It catalyses the reaction Na(+)(in) = Na(+)(out). Its activity is regulated as follows. Activated by high extracellular ATP levels (0.1-2.5 mM). The synthetic analog 2'(3')-O-(4-benzoylbenzoyl)ATP (BzATP) acts as a potent agonist. Does not undergo desensitization, instead, undergoes a facilitation process where currents progressively increase with repetitive or prolonged agonist application. Palmitoylation prevents channel desensitization. The permeability of the P2RX7 channel is modulated by the amount of cholesterol in the plasma membrane. Its function is as follows. ATP-gated nonselective transmembrane cation channel that requires high millimolar concentrations of ATP for activation. Upon ATP binding, it rapidly opens to allow the influx of small cations Na(+) and Ca(2+), and the K(+) efflux. Also has the ability to form a large pore in the cell membrane, allowing the passage of large cationic molecules. In microglia, may mediate NADPH transport across the plasma membrane. In immune cells, P2RX7 acts as a molecular sensor in pathological inflammatory states by detecting and responding to high local concentrations of extracellar ATP. In microglial cells, P2RX7 activation leads to the release of pro-inflammatory cytokines, such as IL-1beta and IL-18, through the activation of the NLRP3 inflammasome and caspase-1. Cooperates with KCNK6 to activate NLRP3 inflammasome. Activates death pathways leading to apoptosis and autophagy. Activates death pathways leading to pyroptosis. In terms of biological role, shows ion channel activity but no macropore function. Non-functional channel. The chain is P2X purinoceptor 7 (P2RX7) from Homo sapiens (Human).